The chain runs to 437 residues: Glutamyl-tRNA reductase (437 aa).

Residues 49-52, Ser109, 114-116, and Gln120 contribute to the substrate site; these read TCNR and ETQ. The Nucleophile role is filled by Cys50. 189–194 contacts NADP(+); the sequence is GAGEMS.

This sequence belongs to the glutamyl-tRNA reductase family. Homodimer.

The enzyme catalyses (S)-4-amino-5-oxopentanoate + tRNA(Glu) + NADP(+) = L-glutamyl-tRNA(Glu) + NADPH + H(+). Its pathway is porphyrin-containing compound metabolism; protoporphyrin-IX biosynthesis; 5-aminolevulinate from L-glutamyl-tRNA(Glu): step 1/2. Its function is as follows. Catalyzes the NADPH-dependent reduction of glutamyl-tRNA(Glu) to glutamate 1-semialdehyde (GSA). This chain is Glutamyl-tRNA reductase, found in Listeria welshimeri serovar 6b (strain ATCC 35897 / DSM 20650 / CCUG 15529 / CIP 8149 / NCTC 11857 / SLCC 5334 / V8).